Consider the following 194-residue polypeptide: Small ribosomal subunit protein uS7 (194 aa).

Belongs to the universal ribosomal protein uS7 family. Part of the 30S ribosomal subunit.

Functionally, one of the primary rRNA binding proteins, it binds directly to 16S rRNA where it nucleates assembly of the head domain of the 30S subunit. Is located at the subunit interface close to the decoding center. The polypeptide is Small ribosomal subunit protein uS7 (Methanocorpusculum labreanum (strain ATCC 43576 / DSM 4855 / Z)).